The chain runs to 94 residues: Small ubiquitin-related modifier 3 (94 aa).

A Glycyl lysine isopeptide (Lys-Gly) (interchain with G-Cter in SUMO) cross-link involves residue Lys-11. The Ubiquitin-like domain maps to 15 to 92 (DHINLKVAGQ…IDVFQQQTGG (78 aa)). Residue Gly-92 forms a Glycyl lysine isopeptide (Gly-Lys) (interchain with K-? in acceptor proteins) linkage. Residues 93 to 94 (SC) constitute a propeptide that is removed on maturation.

The protein belongs to the ubiquitin family. SUMO subfamily. Interacts with sae2 and ube2i. Covalently attached to a number of proteins. Polymeric chains can be formed through Lys-11 cross-linking. In terms of processing, cleavage of precursor form by a sentrin-specific protease is necessary for function.

Its subcellular location is the cytoplasm. It localises to the nucleus. The protein resides in the PML body. Functionally, ubiquitin-like protein which can be covalently attached to target lysines either as a monomer or as a lysine-linked polymer. Does not seem to be involved in protein degradation and may function as an antagonist of ubiquitin in the degradation process. Plays a role in a number of cellular processes such as nuclear transport, DNA replication and repair, mitosis and signal transduction. Covalent attachment to its substrates requires prior activation by the E1 complex sae1-sae2 and linkage to the E2 enzyme ube2i. The chain is Small ubiquitin-related modifier 3 (sumo3) from Danio rerio (Zebrafish).